Consider the following 234-residue polypeptide: Sugar fermentation stimulation protein homolog (234 aa).

Belongs to the SfsA family.

This chain is Sugar fermentation stimulation protein homolog, found in Citrobacter koseri (strain ATCC BAA-895 / CDC 4225-83 / SGSC4696).